Here is a 398-residue protein sequence, read N- to C-terminus: MDGVTPTLSTIRGRTLESSTLHVTPRSLDRNKDQITNIFSGFAGLLAILLVVAVFCILWNWNKRKKRQVPYLRVTVMPLLTLPQTRQRAKNIYDILPWRQEDLGRHESRSMRIFSTESLLSRNSESPEHVPSQAGNAFQEHTAHIHATEYAVGIYDNAMVPQMCGNLTPSAHCINVRASRDCASISSEDSHDYVNVPTAEEIAETLASTKSPSRNLFVLPSTQKLEFTEERDEGCGDAGDCTSLYSPGAEDSDSLSNGEGSSQISNDYVNMTGLDLSAIQERQLWVAFQCCRDYENVPAADPSGSQQQAEKDVPSSNIGHVEDKTDDPGTHVQCVKRTFLASGDYADFQPFTQSEDSQMKHREEMSNEDSSDYENVLTAKLGGRDSEQGPGTQLLPDE.

Residues 1-37 are Extracellular-facing; it reads MDGVTPTLSTIRGRTLESSTLHVTPRSLDRNKDQITN. A helical; Signal-anchor for type III membrane protein transmembrane segment spans residues 38-58; sequence IFSGFAGLLAILLVVAVFCIL. Residues 59–398 are Cytoplasmic-facing; sequence WNWNKRKKRQ…GPGTQLLPDE (340 aa). Position 193 is a phosphotyrosine (tyrosine 193). A disordered region spans residues 228–261; sequence TEERDEGCGDAGDCTSLYSPGAEDSDSLSNGEGS. 2 positions are modified to phosphotyrosine: tyrosine 268 and tyrosine 294. Residues 298–330 are disordered; it reads PAADPSGSQQQAEKDVPSSNIGHVEDKTDDPGT. Residues 303–318 show a composition bias toward polar residues; sequence SGSQQQAEKDVPSSNI. Positions 320-329 are enriched in basic and acidic residues; it reads HVEDKTDDPG. Phosphotyrosine occurs at positions 345 and 373. The tract at residues 347 to 398 is disordered; that stretch reads DFQPFTQSEDSQMKHREEMSNEDSSDYENVLTAKLGGRDSEQGPGTQLLPDE.

When phosphorylated, interacts with GRB2, PIK3R1 and GRAP2. Post-translationally, phosphorylated on tyrosines by Syk, Lck or ZAP70 upon TCR or BCR activation; which leads to the recruitment of GRB2, PIK3R1 and GRAP2. In terms of tissue distribution, expressed in spleen, thymus, and peripheral blood leukocytes. Expressed in several B-, T-, NK and monocyte cell lines.

Its subcellular location is the cell membrane. In terms of biological role, negatively regulates TCR (T-cell antigen receptor)-mediated signaling in T-cells and BCR (B-cell antigen receptor)-mediated signaling in B-cells. The polypeptide is Lymphocyte transmembrane adapter 1 (LAX1) (Homo sapiens (Human)).